The chain runs to 511 residues: Lysine--tRNA ligase 2 (511 aa).

The span at 1 to 11 (MTMEINNTDPS) shows a compositional bias: polar residues. A disordered region spans residues 1 to 21 (MTMEINNTDPSENMPLPDDVD). Positions 421 and 428 each coordinate Mg(2+).

It belongs to the class-II aminoacyl-tRNA synthetase family. As to quaternary structure, homodimer. Requires Mg(2+) as cofactor.

It is found in the cytoplasm. It catalyses the reaction tRNA(Lys) + L-lysine + ATP = L-lysyl-tRNA(Lys) + AMP + diphosphate. This is Lysine--tRNA ligase 2 from Methanosarcina acetivorans (strain ATCC 35395 / DSM 2834 / JCM 12185 / C2A).